Consider the following 407-residue polypeptide: Glycolate oxidase iron-sulfur subunit (407 aa).

4Fe-4S ferredoxin-type domains follow at residues R14–G47 and L66–L95. The [4Fe-4S] cluster site is built by C25, C28, C31, C35, C75, C78, C81, and C85.

As to quaternary structure, the glycolate oxidase likely consists of three subunits, GlcD, GlcE and GlcF. It depends on [4Fe-4S] cluster as a cofactor.

Its subcellular location is the cell inner membrane. The enzyme catalyses glycolate + A = glyoxylate + AH2. It catalyses the reaction (R)-lactate + A = pyruvate + AH2. In vitro the glycolate oxidase activity is inhibited by the sulfhydryl inhibitors CuSO4 and PCMB, by KCN, but not by the metal complexing agent EDTA. Functionally, component of a complex that catalyzes the oxidation of glycolate to glyoxylate. Is required for E.coli to grow on glycolate as a sole source of carbon. Is also able to oxidize D-lactate ((R)-lactate) with a similar rate. Does not link directly to O(2), and 2,6-dichloroindophenol (DCIP) and phenazine methosulfate (PMS) can act as artificial electron acceptors in vitro, but the physiological molecule that functions as a primary electron acceptor during glycolate oxidation is unknown. This chain is Glycolate oxidase iron-sulfur subunit, found in Escherichia coli (strain K12).